The following is a 1538-amino-acid chain: Phenolphthiocerol/phthiocerol polyketide synthase subunit B (1538 aa).

In terms of domain architecture, Ketosynthase family 3 (KS3) spans 33–455 (AEPVAVVGIG…GTNAHVIIEQ (423 aa)). Catalysis depends on for beta-ketoacyl synthase activity residues cysteine 205, histidine 340, and histidine 377. Positions 553–882 (DGSPGPGTVF…TNLYTADIAH (330 aa)) are acyltransferase. Residue serine 649 is the For malonyltransferase activity of the active site. Residue 1153 to 1196 (SQLVIGATGNIGPHLIRQLARMGAKTIVAMARKPGALDELTQCL) participates in NADP(+) binding. The tract at residues 1153–1328 (SQLVIGATGN…TVVDWGLWKS (176 aa)) is beta-ketoacyl reductase. Positions 1423 to 1498 (DMLFDHVGAL…SLTDYLATVL (76 aa)) constitute a Carrier domain. Serine 1458 bears the O-(pantetheine 4'-phosphoryl)serine mark.

Requires NADP(+) as cofactor. The cofactor is pantetheine 4'-phosphate.

It catalyses the reaction icosanoyl-[(phenol)carboxyphthiodiolenone synthase] + 2 (S)-methylmalonyl-CoA + 3 malonyl-CoA + 5 NADPH + 10 H(+) = C32-carboxyphthiodiolenone-[(phenol)carboxyphthiodiolenone synthase] + 5 CO2 + 5 NADP(+) + 5 CoA + 2 H2O. It carries out the reaction docosanoyl-[(phenol)carboxyphthiodiolenone synthase] + 2 (S)-methylmalonyl-CoA + 3 malonyl-CoA + 5 NADPH + 10 H(+) = C34-carboxyphthiodiolenone-[(phenol)carboxyphthiodiolenone synthase] + 5 CO2 + 5 NADP(+) + 5 CoA + 2 H2O. The enzyme catalyses 17-(4-hydroxyphenyl)heptadecanoyl-[(phenol)carboxyphthiodiolenone synthase] + 2 (S)-methylmalonyl-CoA + 3 malonyl-CoA + 5 NADPH + 10 H(+) = C35-(phenol)carboxyphthiodiolenone-[(phenol)carboxyphthiodiolenone synthase] + 5 CO2 + 5 NADP(+) + 5 CoA + 2 H2O. The catalysed reaction is 19-(4-hydroxyphenyl)nonadecanoyl-[(phenol)carboxyphthiodiolenone synthase] + 2 (S)-methylmalonyl-CoA + 3 malonyl-CoA + 5 NADPH + 10 H(+) = C37-(phenol)carboxyphthiodiolenone-[(phenol)carboxyphthiodiolenone synthase] + 5 CO2 + 5 NADP(+) + 5 CoA + 2 H2O. It functions in the pathway lipid metabolism; fatty acid biosynthesis. Functionally, part of the PpsABCDE complex involved in the biosynthesis of the lipid core common to phthiocerols and phenolphthiocerols by successive additions of malonyl-CoA or methylmalonyl-CoA extender units. PpsA can accept as substrate the activated forms of either icosanoyl (C20), docosanoyl (C22) or lignoceroyl (C24) groups from FadD26, or a (4-hydroxyphenyl)-C17 or (4-hydroxyphenyl)-C19 fatty acyl from FadD29. PpsA initiates the biosynthesis and extends its substrate using a malonyl-CoA extender unit. The PpsB and PpsC proteins add the second and third malonyl-CoA extender units. PpsD adds an (R)-methylmalonyl unit and PpsE adds a second (R)-methylmalonyl unit. The incorporation of the methylmalonyl units results in formation of two branched methyl groups in the elongated product. This is Phenolphthiocerol/phthiocerol polyketide synthase subunit B (ppsB) from Mycobacterium bovis (strain ATCC BAA-935 / AF2122/97).